The primary structure comprises 332 residues: MGFGDFSTICTKAAIPLCALVGEQQINGGAGIQTNCYSRTIEIANTLIFQCANDFMHILAMVMTVIMIIHVRSKFTAVGRKEITSVFYIYLLLTIISLILDAGVTAPGSAPYPYFAAVQNGLVSALCTCLLINGFVGFQLYEDGTTLSVWLLRLCSLAMFVVSGAVSLLTFKNWAGLSSKNPIGIMIVTYIVNAIFLFVYVVSQIILVVGTLEDRWPLGDISFGVFFFVIGQVILYVFSDTICDNVQHYIDGLFFATICNLLAVMMVYKYWDSITREDLEFSVGVKQHNWEVKELLPDEDKRGTVYQDSDYTPSLYQQQYNGRHSHYSNLGH.

A run of 7 helical transmembrane segments spans residues 51 to 71 (CANDFMHILAMVMTVIMIIHV), 86 to 106 (VFYIYLLLTIISLILDAGVTA), 121 to 141 (GLVSALCTCLLINGFVGFQLY), 149 to 169 (VWLLRLCSLAMFVVSGAVSLL), 182 to 202 (PIGIMIVTYIVNAIFLFVYVV), 218 to 238 (LGDISFGVFFFVIGQVILYVF), and 248 to 268 (HYIDGLFFATICNLLAVMMVY).

The protein belongs to the CHS7 family. As to quaternary structure, interacts with CHS3.

Its subcellular location is the endoplasmic reticulum membrane. Functionally, chaperone required for the export of the chitin synthase CHS3 from the endoplasmic reticulum. The sequence is that of Chitin synthase export chaperone (CHS7) from Phaeosphaeria nodorum (strain SN15 / ATCC MYA-4574 / FGSC 10173) (Glume blotch fungus).